Reading from the N-terminus, the 455-residue chain is Keratin, type I cuticular Ha5 (455 aa).

Residues 1 to 97 (MASKCLKASF…FGEGILTGNE (97 aa)) are head. Positions 97-408 (EKETMQFLND…GLLDSEDCKL (312 aa)) constitute an IF rod domain. A coil 1A region spans residues 98-132 (KETMQFLNDRLASYLEKVRQLERENAELESRIRDW). Residues 133 to 143 (CEQQVPYLCPD) form a linker 1 region. Positions 144 to 244 (YQSYFQTIEE…HEEEVNSLRC (101 aa)) are coil 1B. The linker 12 stretch occupies residues 245-260 (QLGDRLNVEVDAAPPV). The segment at 261-404 (DLNRVLNEMR…STYRGLLDSE (144 aa)) is coil 2. Residues 405–455 (DCKLPCNPCAPDHSPSKSCLPCLPAASCGPGTAHTTCSPRPICVSCPGSRF) are tail.

It belongs to the intermediate filament family.

The protein is Keratin, type I cuticular Ha5 of Ovis aries (Sheep).